Reading from the N-terminus, the 519-residue chain is 6-phosphofructo-2-kinase/fructose-2,6-bisphosphatase 2 (519 aa).

The segment covering 1–17 (MSENSTFSTEDSCNSSY) has biased composition (polar residues). Positions 1–22 (MSENSTFSTEDSCNSSYKPHAS) are disordered. S2 is modified (N-acetylserine). The 6-phosphofructo-2-kinase stretch occupies residues 2-251 (SENSTFSTED…VYYLMNIHVH (250 aa)). A Phosphoserine; by PKA modification is found at S32. 48-56 (GLPARGKTY) contacts ATP. The beta-D-fructose 6-phosphate site is built by R81 and R105. D131 is an active-site residue. Residues T133 and R139 each coordinate beta-D-fructose 6-phosphate. Residue C161 is part of the active site. 170-175 (NILEVK) serves as a coordination point for ATP. Beta-D-fructose 6-phosphate is bound by residues K175, R196, and Y200. Residues 252–519 (PRTIYLCRHG…PKTQVSIPVV (268 aa)) form a fructose-2,6-bisphosphatase region. A beta-D-fructose 2,6-bisphosphate-binding site is contributed by R259. Catalysis depends on H260, which acts as the Tele-phosphohistidine intermediate. Residues N266 and G272 each coordinate beta-D-fructose 2,6-bisphosphate. The active-site Proton donor/acceptor is the E329. Positions 340, 354, 358, 369, 395, and 399 each coordinate beta-D-fructose 2,6-bisphosphate. An ATP-binding site is contributed by 351-354 (FALR). ATP contacts are provided by residues 395 to 399 (QAVMR) and Y431. The interval 448-493 (HRDKPTHNFPKSQTPVRMRRNSFTPLSSSNTIRRPRNYSVGSRPLK) is disordered. The segment covering 456–479 (FPKSQTPVRMRRNSFTPLSSSNTI) has biased composition (polar residues). Phosphoserine is present on S469. Phosphothreonine is present on T471. T478 is subject to Phosphothreonine; by PKC. 2 positions are modified to phosphoserine: S486 and S496. Residues 500-519 (ALDMQEGADQPKTQVSIPVV) are disordered. A compositionally biased stretch (polar residues) spans 510–519 (PKTQVSIPVV).

The protein in the C-terminal section; belongs to the phosphoglycerate mutase family. Homodimer. Forms a heterodimer with PFKFB3. In terms of processing, phosphorylation by AMPK stimulates activity. In terms of tissue distribution, highest levels in kidney; also found in heart, brain, spleen, lung, liver, skeletal muscle and testis.

It catalyses the reaction beta-D-fructose 2,6-bisphosphate + H2O = beta-D-fructose 6-phosphate + phosphate. The enzyme catalyses beta-D-fructose 6-phosphate + ATP = beta-D-fructose 2,6-bisphosphate + ADP + H(+). Its activity is regulated as follows. Phosphorylation results in the activation of the kinase activity. In terms of biological role, synthesis and degradation of fructose 2,6-bisphosphate. This chain is 6-phosphofructo-2-kinase/fructose-2,6-bisphosphatase 2 (Pfkfb2), found in Mus musculus (Mouse).